A 458-amino-acid chain; its full sequence is Ammonium transporter Rh type B (458 aa).

The Cytoplasmic segment spans residues 1–13; that stretch reads MAGSPSRAAGRRL. The helical transmembrane segment at 14-34 threads the bilayer; sequence QLPLLCLFLQGATAVLFAVFV. Topologically, residues 35 to 61 are extracellular; that stretch reads RYNHKTDAALWHRGNHSNADNEFYFRY. Asparagine 49 carries an N-linked (GlcNAc...) asparagine glycan. The helical transmembrane segment at 62–82 threads the bilayer; sequence PSFQDVHAMVFVGFGFLMVFL. The Cytoplasmic portion of the chain corresponds to 83–86; sequence QRYG. A helical membrane pass occupies residues 87 to 107; sequence FSSVGFTFLLAAFALQWSTLV. At 108 to 124 the chain is on the extracellular side; it reads QGFLHSFHSGHIHVGVE. Residues 125–145 form a helical membrane-spanning segment; sequence SMINADFCAGAVLISFGAVLG. At 146-149 the chain is on the cytoplasmic side; it reads KTGP. A helical membrane pass occupies residues 150 to 170; sequence AQLLLMALLEVVLFGINEFVL. The Extracellular segment spans residues 171 to 178; sequence LHLLGVRD. A helical membrane pass occupies residues 179-201; the sequence is AGGSMTIHTFGAYFGLVLSRVLY. The Cytoplasmic portion of the chain corresponds to 202-219; that stretch reads RPQLEKSKHRQGSVYHSD. The chain crosses the membrane as a helical span at residues 220 to 240; it reads LFAMIGTIFLWIFWPSFNSAL. Topologically, residues 241–251 are extracellular; that stretch reads TALGAGQHRTA. The helical transmembrane segment at 252 to 272 threads the bilayer; sequence LNTYYSLAASTLGTFALSALV. Topologically, residues 273-282 are cytoplasmic; sequence GEDGRLDMVH. A helical transmembrane segment spans residues 283–303; it reads IQNAALAGGVVVGTSSEMMLT. A topological domain (extracellular) is located at residue proline 304. A helical membrane pass occupies residues 305 to 325; sequence FGALAAGFLAGTVSTLGYKFF. Residues 326–346 lie on the Cytoplasmic side of the membrane; that stretch reads TPILESKFKVQDTCGVHNLHG. The helical transmembrane segment at 347-367 threads the bilayer; that stretch reads MPGVLGALLGVLVAGLATHEA. Residues 368-393 lie on the Extracellular side of the membrane; sequence YGDGLESVFPLIAEGQRSATSQAMLQ. Residues 394-414 traverse the membrane as a helical segment; the sequence is LFGLFVTLMFASVGGGLGGLL. Residues 415–458 are Cytoplasmic-facing; sequence LKLPFLDSPPDSQCYEDQVHWQVPGEHEDEAQRPLRVEEADTQA. The interval 416–424 is interaction with ANK3; the sequence is KLPFLDSPP. A Basolateral sorting signal motif is present at residues 429 to 432; that stretch reads YEDQ. The disordered stretch occupies residues 439–458; the sequence is GEHEDEAQRPLRVEEADTQA. A compositionally biased stretch (basic and acidic residues) spans 444-458; sequence EAQRPLRVEEADTQA.

It belongs to the ammonium transporter (TC 2.A.49) family. Rh subfamily. As to quaternary structure, interacts (via C-terminus) with ANK2 and ANK3; required for targeting to the basolateral membrane. Post-translationally, N-glycosylated.

Its subcellular location is the cell membrane. The protein resides in the basolateral cell membrane. The enzyme catalyses NH4(+)(in) = NH4(+)(out). The catalysed reaction is methylamine(out) = methylamine(in). It carries out the reaction CO2(out) = CO2(in). In terms of biological role, ammonium transporter involved in the maintenance of acid-base homeostasis. Transports ammonium and its related derivative methylammonium across the basolateral plasma membrane of epithelial cells likely contributing to renal transepithelial ammonia transport and ammonia metabolism. May transport either NH4(+) or NH3 ammonia species predominantly mediating an electrogenic NH4(+) transport. May act as a CO2 channel providing for renal acid secretion. This is Ammonium transporter Rh type B (RHBG) from Macaca mulatta (Rhesus macaque).